Reading from the N-terminus, the 308-residue chain is Glutamyl-Q tRNA(Asp) synthetase (308 aa).

Residues 19–23 and glutamate 55 each bind L-glutamate; that span reads RFAPS. The 'HIGH' region signature appears at 22-32; sequence PSPSGELHFGS. Zn(2+) is bound by residues cysteine 111, cysteine 113, tyrosine 125, and cysteine 129. Positions 182 and 200 each coordinate L-glutamate. The short motif at 238–242 is the 'KMSKS' region element; that stretch reads KLSKQ. Residue lysine 241 coordinates ATP.

Belongs to the class-I aminoacyl-tRNA synthetase family. GluQ subfamily. It depends on Zn(2+) as a cofactor.

Catalyzes the tRNA-independent activation of glutamate in presence of ATP and the subsequent transfer of glutamate onto a tRNA(Asp). Glutamate is transferred on the 2-amino-5-(4,5-dihydroxy-2-cyclopenten-1-yl) moiety of the queuosine in the wobble position of the QUC anticodon. The polypeptide is Glutamyl-Q tRNA(Asp) synthetase (Escherichia coli (strain K12 / MC4100 / BW2952)).